Reading from the N-terminus, the 366-residue chain is Protein FAM110B (366 aa).

Disordered regions lie at residues 127–152 (SSEG…DTTD), 163–182 (KVYP…HVSR), and 216–252 (CSSS…RPSL). Residues Ser234 and Ser297 each carry the phosphoserine modification. The disordered stretch occupies residues 313–333 (DCEQSQDSNSDLRNDDSANDR). Positions 322 to 331 (SDLRNDDSAN) are enriched in basic and acidic residues.

This sequence belongs to the FAM110 family.

Its subcellular location is the cytoplasm. It is found in the cytoskeleton. The protein localises to the microtubule organizing center. The protein resides in the centrosome. The polypeptide is Protein FAM110B (Fam110b) (Mus musculus (Mouse)).